The following is a 260-amino-acid chain: Eukaryotic translation initiation factor 3 subunit G-2 (260 aa).

Residues 180-258 form the RRM domain; that stretch reads CAVRISNLSE…LILSVEWSKP (79 aa).

It belongs to the eIF-3 subunit G family. As to quaternary structure, component of the eukaryotic translation initiation factor 3 (eIF-3) complex. The eIF-3 complex interacts with pix.

The protein localises to the cytoplasm. Its function is as follows. RNA-binding component of the eukaryotic translation initiation factor 3 (eIF-3) complex, which is involved in protein synthesis of a specialized repertoire of mRNAs and, together with other initiation factors, stimulates binding of mRNA and methionyl-tRNAi to the 40S ribosome. The eIF-3 complex specifically targets and initiates translation of a subset of mRNAs involved in cell proliferation. This subunit can bind 18S rRNA. This is Eukaryotic translation initiation factor 3 subunit G-2 from Drosophila grimshawi (Hawaiian fruit fly).